The sequence spans 154 residues: 3-dehydroquinate dehydratase (154 aa).

Residue Y23 is the Proton acceptor of the active site. Substrate contacts are provided by N75, H81, and D88. The active-site Proton donor is the H101. Substrate-binding positions include 102–103 (LS) and R112.

It belongs to the type-II 3-dehydroquinase family. Homododecamer.

It catalyses the reaction 3-dehydroquinate = 3-dehydroshikimate + H2O. The protein operates within metabolic intermediate biosynthesis; chorismate biosynthesis; chorismate from D-erythrose 4-phosphate and phosphoenolpyruvate: step 3/7. Its function is as follows. Catalyzes a trans-dehydration via an enolate intermediate. The chain is 3-dehydroquinate dehydratase from Teredinibacter turnerae (strain ATCC 39867 / T7901).